Reading from the N-terminus, the 399-residue chain is Tyrosine--tRNA ligase (399 aa).

A 'HIGH' region motif is present at residues 44–53; the sequence is PTAPDLHLGH. Positions 229 to 233 match the 'KMSKS' region motif; it reads KMSKS. Lysine 232 contacts ATP. In terms of domain architecture, S4 RNA-binding spans 338-398; that stretch reads ISITKALVDC…GKRKFAKLKV (61 aa).

The protein belongs to the class-I aminoacyl-tRNA synthetase family. TyrS type 2 subfamily. Homodimer.

The protein resides in the cytoplasm. It catalyses the reaction tRNA(Tyr) + L-tyrosine + ATP = L-tyrosyl-tRNA(Tyr) + AMP + diphosphate + H(+). In terms of biological role, catalyzes the attachment of tyrosine to tRNA(Tyr) in a two-step reaction: tyrosine is first activated by ATP to form Tyr-AMP and then transferred to the acceptor end of tRNA(Tyr). The sequence is that of Tyrosine--tRNA ligase from Sulfurimonas denitrificans (strain ATCC 33889 / DSM 1251) (Thiomicrospira denitrificans (strain ATCC 33889 / DSM 1251)).